A 122-amino-acid chain; its full sequence is Transcription initiation factor IIA subunit 2 (122 aa).

Serine 95 and serine 102 each carry phosphoserine.

This sequence belongs to the TFIIA subunit 2 family. TFIIA is a heterodimer composed of the large TOA1 and a small TOA2 subunits. Interacts with TBP. Interacts with TAF11. Interacts with KAP122.

It localises to the cytoplasm. It is found in the nucleus. TFIIA is a component of the transcription machinery of RNA polymerase II and plays an important role in transcriptional activation. TFIIA in a complex with TBP mediates transcriptional activity. This Saccharomyces cerevisiae (strain ATCC 204508 / S288c) (Baker's yeast) protein is Transcription initiation factor IIA subunit 2 (TOA2).